The primary structure comprises 243 residues: Zinc import ATP-binding protein ZnuC (243 aa).

Positions 8–225 constitute an ABC transporter domain; that stretch reads LNLSNVSYYI…SEFQKLFGHH (218 aa). 40–47 is a binding site for ATP; that stretch reads GPNGAGKS.

The protein belongs to the ABC transporter superfamily. Zinc importer (TC 3.A.1.15.5) family. As to quaternary structure, the complex is composed of two ATP-binding proteins (ZnuC), two transmembrane proteins (ZnuB) and a solute-binding protein (ZnuA).

The protein localises to the cell inner membrane. It catalyses the reaction Zn(2+)(out) + ATP(in) + H2O(in) = Zn(2+)(in) + ADP(in) + phosphate(in) + H(+)(in). Part of the ABC transporter complex ZnuABC involved in zinc import. Responsible for energy coupling to the transport system. In Psychrobacter cryohalolentis (strain ATCC BAA-1226 / DSM 17306 / VKM B-2378 / K5), this protein is Zinc import ATP-binding protein ZnuC.